The following is a 214-amino-acid chain: Large ribosomal subunit protein uL3 (214 aa).

Positions Thr136 to Gly156 are disordered. Gln153 is subject to N5-methylglutamine.

It belongs to the universal ribosomal protein uL3 family. As to quaternary structure, part of the 50S ribosomal subunit. Forms a cluster with proteins L14 and L19. Methylated by PrmB.

Its function is as follows. One of the primary rRNA binding proteins, it binds directly near the 3'-end of the 23S rRNA, where it nucleates assembly of the 50S subunit. The sequence is that of Large ribosomal subunit protein uL3 from Thioalkalivibrio sulfidiphilus (strain HL-EbGR7).